We begin with the raw amino-acid sequence, 178 residues long: GTP-dependent dephospho-CoA kinase (178 aa).

Positions 55, 57, 74, 76, and 127 each coordinate GTP.

The protein belongs to the GTP-dependent DPCK family.

It carries out the reaction 3'-dephospho-CoA + GTP = GDP + CoA + H(+). It functions in the pathway cofactor biosynthesis; coenzyme A biosynthesis. In terms of biological role, catalyzes the GTP-dependent phosphorylation of the 3'-hydroxyl group of dephosphocoenzyme A to form coenzyme A (CoA). The protein is GTP-dependent dephospho-CoA kinase of Saccharolobus islandicus (strain Y.N.15.51 / Yellowstone #2) (Sulfolobus islandicus).